The sequence spans 502 residues: Cardiolipin synthase (502 aa).

A run of 3 helical transmembrane segments spans residues 7 to 27, 29 to 49, and 59 to 79; these read VAIL…YWGG, LLGI…FVIS, and IAWL…YLLF. 2 PLD phosphodiesterase domains span residues 237-264 and 415-442; these read INFR…GDEY and EKGF…DMRS. Active-site residues include H242, K244, D249, H420, K422, and D427.

Belongs to the phospholipase D family. Cardiolipin synthase subfamily.

It is found in the cell membrane. The catalysed reaction is 2 a 1,2-diacyl-sn-glycero-3-phospho-(1'-sn-glycerol) = a cardiolipin + glycerol. Functionally, catalyzes the reversible phosphatidyl group transfer from one phosphatidylglycerol molecule to another to form cardiolipin (CL) (diphosphatidylglycerol) and glycerol. The protein is Cardiolipin synthase (cls) of Geobacillus thermodenitrificans (strain NG80-2).